The following is a 196-amino-acid chain: Probable phosphoheptose isomerase (196 aa).

An SIS domain is found at 43–196 (IVNVFNSGGK…MICSVIDSYY (154 aa)). 58-60 (NGG) contributes to the substrate binding site. Zn(2+)-binding residues include His-67 and Glu-71. Residues Glu-71, 100 to 101 (ND), 126 to 128 (STS), Ser-131, and Gln-178 each bind substrate. Positions 178 and 186 each coordinate Zn(2+).

It belongs to the SIS family. GmhA subfamily. Zn(2+) serves as cofactor.

Its subcellular location is the cytoplasm. It catalyses the reaction 2 D-sedoheptulose 7-phosphate = D-glycero-alpha-D-manno-heptose 7-phosphate + D-glycero-beta-D-manno-heptose 7-phosphate. It participates in carbohydrate biosynthesis; D-glycero-D-manno-heptose 7-phosphate biosynthesis; D-glycero-alpha-D-manno-heptose 7-phosphate and D-glycero-beta-D-manno-heptose 7-phosphate from sedoheptulose 7-phosphate: step 1/1. Catalyzes the isomerization of sedoheptulose 7-phosphate in D-glycero-D-manno-heptose 7-phosphate. The protein is Probable phosphoheptose isomerase of Thermoplasma volcanium (strain ATCC 51530 / DSM 4299 / JCM 9571 / NBRC 15438 / GSS1).